A 282-amino-acid polypeptide reads, in one-letter code: Ubiquinone biosynthesis protein COQ4 homolog, mitochondrial (282 aa).

The transit peptide at 1–30 directs the protein to the mitochondrion; the sequence is MFVRKSCYSLINATRRCLRYRQLSSTTAGT. The Zn(2+) site is built by histidine 186, aspartate 187, histidine 190, and glutamate 202.

The protein belongs to the COQ4 family. Component of a multi-subunit COQ enzyme complex. Zn(2+) serves as cofactor.

Its subcellular location is the mitochondrion inner membrane. The catalysed reaction is a 4-hydroxy-3-methoxy-5-(all-trans-polyprenyl)benzoate + H(+) = a 2-methoxy-6-(all-trans-polyprenyl)phenol + CO2. It functions in the pathway cofactor biosynthesis; ubiquinone biosynthesis. Lyase that catalyzes the C1-decarboxylation of 4-hydroxy-3-methoxy-5-(all-trans-polyprenyl)benzoic acid into 2-methoxy-6-(all-trans-polyprenyl)phenol during ubiquinone biosynthesis. The sequence is that of Ubiquinone biosynthesis protein COQ4 homolog, mitochondrial from Anopheles gambiae (African malaria mosquito).